Here is a 63-residue protein sequence, read N- to C-terminus: Large ribosomal subunit protein uL29 (63 aa).

It belongs to the universal ribosomal protein uL29 family.

This is Large ribosomal subunit protein uL29 from Pseudoalteromonas translucida (strain TAC 125).